The following is a 2194-amino-acid chain: Genome polyprotein (2194 aa).

A lipid anchor (N-myristoyl glycine; by host) is attached at G2. Residues 2–1504 (GAQVSTQKTG…HVSRAFICLQ (1503 aa)) are Cytoplasmic-facing. Residues 566–582 (LYQNDPEGALNKAVGRV) form an amphipathic alpha-helix region. Catalysis depends on for protease 2A activity residues H881 and D899. Residues C916 and C918 each contribute to the Zn(2+) site. The active-site For protease 2A activity is the C970. C976 and H978 together coordinate Zn(2+). The tract at residues 1110-1182 (NNNWLKKFTE…EQSAPSQSDQ (73 aa)) is membrane-binding. Positions 1110-1248 (NNNWLKKFTE…SPGAGKSVAT (139 aa)) are oligomerization. The RNA-binding stretch occupies residues 1131 to 1135 (AIKIQ). Residues 1214 to 1370 (EKKMSNYIQF…SMYSQNGKIN (157 aa)) form the SF3 helicase domain. Zn(2+) is bound by residues C1378, C1390, and C1395. The segment at 1378–1395 (CDEECCPVNFKRCCPLVC) adopts a C4-type; degenerate zinc-finger fold. The tract at residues 1422–1429 (EYNHRHSV) is RNA-binding. The interval 1433–1438 (LEALFQ) is oligomerization. Residues 1505-1520 (ALTTFVSVAGIIYIIY) lie within the membrane without spanning it. Over 1521–2194 (KLFAGFQGAY…TLRRKWLDSF (674 aa)) the chain is Cytoplasmic. Position 1530 is an O-(5'-phospho-RNA)-tyrosine (Y1530). The Peptidase C3 domain occupies 1550-1728 (GPAFEFAVAM…FSAALLRHYF (179 aa)). Residues H1589, E1620, and C1696 each act as for protease 3C activity in the active site. Positions 1959-2075 (GHLIAFDYSG…SYPHPIDASL (117 aa)) constitute a RdRp catalytic domain. Positions 1965 and 2061 each coordinate Mg(2+).

The protein belongs to the picornaviruses polyprotein family. In terms of assembly, interacts with capsid protein VP1 and capsid protein VP3 to form heterotrimeric protomers. As to quaternary structure, interacts with capsid protein VP0, and capsid protein VP3 to form heterotrimeric protomers. Five protomers subsequently associate to form pentamers which serve as building blocks for the capsid. Interacts with capsid protein VP2, capsid protein VP3 and capsid protein VP4 following cleavage of capsid protein VP0. Interacts with capsid protein VP1 and capsid protein VP3 in the mature capsid. In terms of assembly, interacts with capsid protein VP0 and capsid protein VP1 to form heterotrimeric protomers. Five protomers subsequently associate to form pentamers which serve as building blocks for the capsid. Interacts with capsid protein VP4 in the mature capsid. Interacts with protein 2C; this interaction may be important for virion morphogenesis. As to quaternary structure, interacts with capsid protein VP1 and capsid protein VP3. Homodimer. In terms of assembly, homohexamer; forms a hexameric ring structure with 6-fold symmetry characteristic of AAA+ ATPases. Interacts (via N-terminus) with host RTN3 (via reticulon domain); this interaction is important for viral replication. Interacts with capsid protein VP3; this interaction may be important for virion morphogenesis. As to quaternary structure, interacts with protein 3CD. Homodimer. Interacts with host GBF1. Interacts (via GOLD domain) with host ACBD3 (via GOLD domain); this interaction allows the formation of a viral protein 3A/ACBD3 heterotetramer with a 2:2 stoichiometry, which will stimulate the recruitment of host PI4KB in order to synthesize PI4P at the viral RNA replication sites. In terms of assembly, interacts with RNA-directed RNA polymerase. As to quaternary structure, interacts with protein 3AB and with RNA-directed RNA polymerase. Interacts with Viral protein genome-linked and with protein 3CD. Mg(2+) is required as a cofactor. Post-translationally, specific enzymatic cleavages in vivo by the viral proteases yield processing intermediates and the mature proteins. In terms of processing, myristoylation is required for the formation of pentamers during virus assembly. Further assembly of 12 pentamers and a molecule of genomic RNA generates the provirion. During virion maturation, immature virions are rendered infectious following cleavage of VP0 into VP4 and VP2. This maturation seems to be an autocatalytic event triggered by the presence of RNA in the capsid and it is followed by a conformational change infectious virion. Post-translationally, myristoylation is required during RNA encapsidation and formation of the mature virus particle. In terms of processing, VPg is uridylylated by the polymerase into VPg-pUpU. This acts as a nucleotide-peptide primer for the genomic RNA replication.

It is found in the virion. Its subcellular location is the host cytoplasm. It localises to the host cytoplasmic vesicle membrane. The protein localises to the host nucleus. It carries out the reaction a ribonucleoside 5'-triphosphate + H2O = a ribonucleoside 5'-diphosphate + phosphate + H(+). The enzyme catalyses Selective cleavage of Tyr-|-Gly bond in the picornavirus polyprotein.. It catalyses the reaction RNA(n) + a ribonucleoside 5'-triphosphate = RNA(n+1) + diphosphate. The catalysed reaction is Selective cleavage of Gln-|-Gly bond in the poliovirus polyprotein. In other picornavirus reactions Glu may be substituted for Gln, and Ser or Thr for Gly.. Replication or transcription is subject to high level of random mutations by the nucleotide analog ribavirin. Its function is as follows. Forms an icosahedral capsid of pseudo T=3 symmetry with capsid proteins VP2 and VP3. The capsid is 300 Angstroms in diameter, composed of 60 copies of each capsid protein and enclosing the viral positive strand RNA genome. Capsid protein VP1 mainly forms the vertices of the capsid. Capsid protein VP1 interacts with host cell receptor to provide virion attachment to target host cells. This attachment induces virion internalization. Tyrosine kinases are probably involved in the entry process. After binding to its receptor, the capsid undergoes conformational changes. Capsid protein VP1 N-terminus (that contains an amphipathic alpha-helix) and capsid protein VP4 are externalized. Together, they shape a pore in the host membrane through which viral genome is translocated to host cell cytoplasm. In terms of biological role, forms an icosahedral capsid of pseudo T=3 symmetry with capsid proteins VP2 and VP3. The capsid is 300 Angstroms in diameter, composed of 60 copies of each capsid protein and enclosing the viral positive strand RNA genome. Functionally, lies on the inner surface of the capsid shell. After binding to the host receptor, the capsid undergoes conformational changes. Capsid protein VP4 is released, Capsid protein VP1 N-terminus is externalized, and together, they shape a pore in the host membrane through which the viral genome is translocated into the host cell cytoplasm. Component of immature procapsids, which is cleaved into capsid proteins VP4 and VP2 after maturation. Allows the capsid to remain inactive before the maturation step. Its function is as follows. Cysteine protease that cleaves viral polyprotein and specific host proteins. It is responsible for the autocatalytic cleavage between the P1 and P2 regions, which is the first cleavage occurring in the polyprotein. Also cleaves the host translation initiation factor EIF4G1, in order to shut down the capped cellular mRNA translation. Inhibits the host nucleus-cytoplasm protein and RNA trafficking by cleaving host members of the nuclear pores. Counteracts stress granule formation probably by antagonizing its assembly or promoting its dissassembly. In terms of biological role, plays an essential role in the virus replication cycle by acting as a viroporin. Creates a pore in the host endoplasmic reticulum and as a consequence releases Ca2+ in the cytoplasm of infected cell. In turn, high levels of cytoplasmic calcium may trigger membrane trafficking and transport of viral ER-associated proteins to viroplasms, sites of viral genome replication. Functionally, induces and associates with structural rearrangements of intracellular membranes. Displays RNA-binding, nucleotide binding and NTPase activities. May play a role in virion morphogenesis and viral RNA encapsidation by interacting with the capsid protein VP3. Localizes the viral replication complex to the surface of membranous vesicles. Together with protein 3CD binds the Cis-Active RNA Element (CRE) which is involved in RNA synthesis initiation. Acts as a cofactor to stimulate the activity of 3D polymerase, maybe through a nucleid acid chaperone activity. Its function is as follows. Localizes the viral replication complex to the surface of membranous vesicles. It inhibits host cell endoplasmic reticulum-to-Golgi apparatus transport and causes the disassembly of the Golgi complex, possibly through GBF1 interaction. This would result in depletion of MHC, trail receptors and IFN receptors at the host cell surface. Plays an essential role in viral RNA replication by recruiting ACBD3 and PI4KB at the viral replication sites, thereby allowing the formation of the rearranged membranous structures where viral replication takes place. In terms of biological role, acts as a primer for viral RNA replication and remains covalently bound to viral genomic RNA. VPg is uridylylated prior to priming replication into VPg-pUpU. The oriI viral genomic sequence may act as a template for this. The VPg-pUpU is then used as primer on the genomic RNA poly(A) by the RNA-dependent RNA polymerase to replicate the viral genome. During genome replication, the VPg-RNA linkage is removed by the host TDP2, thereby accelerating replication. During the late stage of the replication cycle, host TDP2 is excluded from sites of viral RNA synthesis and encapsidation, allowing for the generation of progeny virions. Functionally, involved in the viral replication complex and viral polypeptide maturation. It exhibits protease activity with a specificity and catalytic efficiency that is different from protease 3C. Protein 3CD lacks polymerase activity. Protein 3CD binds to the 5'UTR of the viral genome. Replicates the viral genomic RNA on the surface of intracellular membranes. May form linear arrays of subunits that propagate along a strong head-to-tail interaction called interface-I. Covalently attaches UMP to a tyrosine of VPg, which is used to prime RNA synthesis. The positive stranded RNA genome is first replicated at virus induced membranous vesicles, creating a dsRNA genomic replication form. This dsRNA is then used as template to synthesize positive stranded RNA genomes. ss(+)RNA genomes are either translated, replicated or encapsidated. Its function is as follows. Major viral protease that mediates proteolytic processing of the polyprotein. Cleaves host EIF5B, contributing to host translation shutoff. Also cleaves host PABPC1, contributing to host translation shutoff. Cleaves host NLRP1, triggers host N-glycine-mediated degradation of the autoinhibitory NLRP1 N-terminal fragment. In Homo sapiens (Human), this protein is Genome polyprotein.